The chain runs to 156 residues: Small ribosomal subunit protein uS7 (156 aa).

Belongs to the universal ribosomal protein uS7 family. Part of the 30S ribosomal subunit. Contacts proteins S9 and S11.

Functionally, one of the primary rRNA binding proteins, it binds directly to 16S rRNA where it nucleates assembly of the head domain of the 30S subunit. Is located at the subunit interface close to the decoding center, probably blocks exit of the E-site tRNA. The polypeptide is Small ribosomal subunit protein uS7 (Bartonella tribocorum (strain CIP 105476 / IBS 506)).